The sequence spans 255 residues: Probable ubiquitin carboxyl-terminal hydrolase (255 aa).

In terms of domain architecture, UCH catalytic spans 13–237 (NWIPLEANPE…IRFNLMGLVK (225 aa)). An interaction with ubiquitin region spans residues 16-21 (PLEANP). The active-site Nucleophile is cysteine 103. The Proton donor role is filled by histidine 177. Residues 227-232 (EIRFNL) are interaction with ubiquitin. Positions 235-255 (LVKKPNEESEEEEEKEKEETK) are disordered. Positions 242-255 (ESEEEEEKEKEETK) are enriched in acidic residues.

This sequence belongs to the peptidase C12 family.

Its subcellular location is the cytoplasm. It catalyses the reaction Thiol-dependent hydrolysis of ester, thioester, amide, peptide and isopeptide bonds formed by the C-terminal Gly of ubiquitin (a 76-residue protein attached to proteins as an intracellular targeting signal).. Ubiquitin-protein hydrolase is involved both in the processing of ubiquitin precursors and of ubiquitinated proteins. This enzyme is a thiol protease that recognizes and hydrolyzes a peptide bond at the C-terminal glycine of either ubiquitin or nedd8. This is Probable ubiquitin carboxyl-terminal hydrolase (uch1) from Dictyostelium discoideum (Social amoeba).